The chain runs to 644 residues: Chaperone protein DnaK (644 aa).

Phosphothreonine; by autocatalysis is present on Thr-199. Positions Tyr-603 to Lys-644 are disordered. A compositionally biased stretch (polar residues) spans Glu-609–Thr-623. Residues Gly-629–Lys-644 show a composition bias toward acidic residues.

It belongs to the heat shock protein 70 family.

In terms of biological role, acts as a chaperone. This chain is Chaperone protein DnaK, found in Legionella pneumophila (strain Corby).